The primary structure comprises 326 residues: tRNA N6-adenosine threonylcarbamoyltransferase (326 aa).

His-111 and His-115 together coordinate Fe cation. Substrate-binding positions include 134 to 138, Asp-167, Gly-180, Asp-184, and Asn-268; that span reads TVSGG. Residue Asp-293 coordinates Fe cation.

Belongs to the KAE1 / TsaD family. The cofactor is Fe(2+).

It is found in the cytoplasm. The enzyme catalyses L-threonylcarbamoyladenylate + adenosine(37) in tRNA = N(6)-L-threonylcarbamoyladenosine(37) in tRNA + AMP + H(+). Its function is as follows. Required for the formation of a threonylcarbamoyl group on adenosine at position 37 (t(6)A37) in tRNAs that read codons beginning with adenine. Is involved in the transfer of the threonylcarbamoyl moiety of threonylcarbamoyl-AMP (TC-AMP) to the N6 group of A37, together with TsaE and TsaB. TsaD likely plays a direct catalytic role in this reaction. The polypeptide is tRNA N6-adenosine threonylcarbamoyltransferase (Dehalococcoides mccartyi (strain ATCC BAA-2100 / JCM 16839 / KCTC 5957 / BAV1)).